The following is a 214-amino-acid chain: Cytochrome c biogenesis ATP-binding export protein CcmA (214 aa).

The ABC transporter domain occupies 12-214 (LAARALAFSR…TRMLTLEAAA (203 aa)). 44–51 (GDNGAGKT) contributes to the ATP binding site.

It belongs to the ABC transporter superfamily. CcmA exporter (TC 3.A.1.107) family. As to quaternary structure, the complex is composed of two ATP-binding proteins (CcmA) and two transmembrane proteins (CcmB).

It is found in the cell inner membrane. The enzyme catalyses heme b(in) + ATP + H2O = heme b(out) + ADP + phosphate + H(+). Functionally, part of the ABC transporter complex CcmAB involved in the biogenesis of c-type cytochromes; once thought to export heme, this seems not to be the case, but its exact role is uncertain. Responsible for energy coupling to the transport system. The polypeptide is Cytochrome c biogenesis ATP-binding export protein CcmA (Xanthomonas campestris pv. campestris (strain 8004)).